The sequence spans 221 residues: Peroxiredoxin 2 (221 aa).

A Thioredoxin domain is found at 15–170; sequence PQIGAPAPDF…IIRIIDALQT (156 aa). Cysteine 56 serves as the catalytic Cysteine sulfenic acid (-SOH) intermediate. Arginine 133 contributes to the substrate binding site. A disulfide bridge links cysteine 211 with cysteine 217.

The protein belongs to the peroxiredoxin family. Prx6 subfamily. In terms of assembly, homodecamer. Pentamer of dimers that assemble into a ring structure.

Its subcellular location is the cytoplasm. It catalyses the reaction a hydroperoxide + [thioredoxin]-dithiol = an alcohol + [thioredoxin]-disulfide + H2O. Functionally, thiol-specific peroxidase that catalyzes the reduction of hydrogen peroxide and organic hydroperoxides to water and alcohols, respectively. Plays a role in cell protection against oxidative stress by detoxifying peroxides. In Caldanaerobacter subterraneus subsp. tengcongensis (strain DSM 15242 / JCM 11007 / NBRC 100824 / MB4) (Thermoanaerobacter tengcongensis), this protein is Peroxiredoxin 2.